We begin with the raw amino-acid sequence, 426 residues long: Oligouridylate-binding protein 1A (426 aa).

Positions 1 to 26 are disordered; it reads MQNQRLIKQQQQQQQQQHQQAMIQQA. Over residues 9-26 the composition is skewed to low complexity; sequence QQQQQQQQQHQQAMIQQA. 2 consecutive RRM domains span residues 63–137 and 148–226; these read RSVY…WAYA and FNIF…WATK. A disordered region spans residues 230–268; sequence FGEDKHSSDGKSVVELTNGSSEDGRELSNEDAPENNPQF. Phosphoserine is present on serine 250. Residues 269-344 enclose the RRM 3 domain; that stretch reads TTVYVGNLSP…RQIRCSWGNK (76 aa).

Interacts with UBA1A and UBA2A.

The protein resides in the nucleus. In terms of biological role, heterogeneous nuclear ribonucleoprotein (hnRNP)-like protein that acts as a component of the pre-mRNA processing machinery. Functions to facilitate the nuclear maturation of plant pre-mRNAs. The polypeptide is Oligouridylate-binding protein 1A (UBP1A) (Arabidopsis thaliana (Mouse-ear cress)).